Reading from the N-terminus, the 485-residue chain is UDP-N-acetylmuramate--L-alanine ligase (485 aa).

120-126 (GSHGKTT) contributes to the ATP binding site.

This sequence belongs to the MurCDEF family.

The protein localises to the cytoplasm. The catalysed reaction is UDP-N-acetyl-alpha-D-muramate + L-alanine + ATP = UDP-N-acetyl-alpha-D-muramoyl-L-alanine + ADP + phosphate + H(+). The protein operates within cell wall biogenesis; peptidoglycan biosynthesis. In terms of biological role, cell wall formation. This Rickettsia massiliae (strain Mtu5) protein is UDP-N-acetylmuramate--L-alanine ligase.